Consider the following 219-residue polypeptide: Ribose-5-phosphate isomerase A (219 aa).

Residues 28-31, 81-84, and 94-97 each bind substrate; these read TGST, DGAD, and KGGG. The active-site Proton acceptor is Glu-103. Lys-121 contacts substrate.

The protein belongs to the ribose 5-phosphate isomerase family. As to quaternary structure, homodimer.

The enzyme catalyses aldehydo-D-ribose 5-phosphate = D-ribulose 5-phosphate. It participates in carbohydrate degradation; pentose phosphate pathway; D-ribose 5-phosphate from D-ribulose 5-phosphate (non-oxidative stage): step 1/1. Functionally, catalyzes the reversible conversion of ribose-5-phosphate to ribulose 5-phosphate. This Pectobacterium carotovorum subsp. carotovorum (strain PC1) protein is Ribose-5-phosphate isomerase A.